The chain runs to 273 residues: Putative phosphoenolpyruvate synthase regulatory protein (273 aa).

154-161 (GVSRSGKT) is a binding site for ADP.

It belongs to the pyruvate, phosphate/water dikinase regulatory protein family. PSRP subfamily.

It catalyses the reaction [pyruvate, water dikinase] + ADP = [pyruvate, water dikinase]-phosphate + AMP + H(+). It carries out the reaction [pyruvate, water dikinase]-phosphate + phosphate + H(+) = [pyruvate, water dikinase] + diphosphate. Bifunctional serine/threonine kinase and phosphorylase involved in the regulation of the phosphoenolpyruvate synthase (PEPS) by catalyzing its phosphorylation/dephosphorylation. The protein is Putative phosphoenolpyruvate synthase regulatory protein of Neisseria meningitidis serogroup B (strain ATCC BAA-335 / MC58).